A 361-amino-acid chain; its full sequence is Mannose-1-phosphate guanyltransferase (361 aa).

Belongs to the transferase hexapeptide repeat family.

The protein resides in the cytoplasm. It catalyses the reaction alpha-D-mannose 1-phosphate + GTP + H(+) = GDP-alpha-D-mannose + diphosphate. It functions in the pathway nucleotide-sugar biosynthesis; GDP-alpha-D-mannose biosynthesis; GDP-alpha-D-mannose from alpha-D-mannose 1-phosphate (GTP route): step 1/1. In terms of biological role, involved in cell wall synthesis where it is required for glycosylation. Involved in cell cycle progression through cell-size checkpoint. This is Mannose-1-phosphate guanyltransferase (MPG1) from Kluyveromyces lactis (strain ATCC 8585 / CBS 2359 / DSM 70799 / NBRC 1267 / NRRL Y-1140 / WM37) (Yeast).